Consider the following 708-residue polypeptide: Double-strand break repair protein MRE11 (708 aa).

At serine 2 the chain carries N-acetylserine. Serine 2 is subject to Phosphoserine. Positions 20, 22, and 60 each coordinate Mn(2+). Residues 87–117 (RPVQFEILSDQSVNFGFSKFPWVNYQDGNLN) form an interaction with NBN region. Asparagine 128 contributes to the Mn(2+) binding site. Histidine 129 serves as the catalytic Proton donor. Histidine 217, histidine 245, and histidine 247 together coordinate Mn(2+). A Glycyl lysine isopeptide (Lys-Gly) (interchain with G-Cter in SUMO2) cross-link involves residue lysine 255. Serine 275 carries the phosphoserine modification. Lysine 282 is covalently cross-linked (Glycyl lysine isopeptide (Lys-Gly) (interchain with G-Cter in UFM1)). Lysine 339 is covalently cross-linked (Glycyl lysine isopeptide (Lys-Gly) (interchain with G-Cter in ubiquitin)). Lysine 384 is covalently cross-linked (Glycyl lysine isopeptide (Lys-Gly) (interchain with G-Cter in SUMO)). Lysine 416 is covalently cross-linked (Glycyl lysine isopeptide (Lys-Gly) (interchain with G-Cter in SUMO2)). A Glycyl lysine isopeptide (Lys-Gly) (interchain with G-Cter in SUMO) cross-link involves residue lysine 467. Lysine 480 is covalently cross-linked (Glycyl lysine isopeptide (Lys-Gly) (interchain with G-Cter in ubiquitin)). Disordered regions lie at residues 507–540 (TRQK…ASAF) and 556–614 (NDSD…AVSA). A compositionally biased stretch (basic residues) spans 569-579 (GRGRGRGRRGG). Residues arginine 570, arginine 572, arginine 574, arginine 576, arginine 577, arginine 580, arginine 587, arginine 592, and arginine 594 each carry the asymmetric dimethylarginine modification. Residues 570–594 (RGRGRGRRGGRGQNSASRGGSQRGR) carry the GAR motif. Polar residues predominate over residues 599–614 (LETSTRSRNSKTAVSA). Serine 619 carries the post-translational modification Phosphoserine. Lysine 625 is covalently cross-linked (Glycyl lysine isopeptide (Lys-Gly) (interchain with G-Cter in SUMO2)). Serine 641 carries the post-translational modification Phosphoserine. Serine 649 is subject to Phosphoserine; by PLK1. The segment at 651–708 (VEEDIFPTTSKTDQRWSSTSSSKIMSQSQVSKGVDFESSEDDDDDPFMNTSSLRRNRR) is disordered. Residues 667–681 (SSTSSSKIMSQSQVS) are compositionally biased toward low complexity. Lysine 673 is modified (N6-lactoyllysine). Residues serine 676 and serine 678 each carry the phosphoserine; by ATM modification. The segment covering 687–696 (ESSEDDDDDP) has biased composition (acidic residues). A Phosphoserine; by CDK2 modification is found at serine 688. Phosphoserine is present on residues serine 689 and serine 701. Residues 698 to 708 (MNTSSLRRNRR) show a composition bias toward polar residues.

It belongs to the MRE11/RAD32 family. As to quaternary structure, component of the MRN complex composed of two heterodimers RAD50 and MRE11 associated with a single NBN. The MRN complexes dimerize on DNA to form joined MRN-MRN oligomers required for DNA double-strand break repair. As part of the MRN complex, interacts with MCM9; the interaction recruits the complex to DNA repair sites. Component of the BASC complex, at least composed of BRCA1, MSH2, MSH6, MLH1, ATM, BLM, RAD50, MRE11 and NBN. Found in a complex with TERF2. Interacts with DCLRE1C/Artemis and DCLRE1B/Apollo. Interacts with ATF2. Interacts with EXD2. Interacts with MRNIP. Interacts with SAMHD1; leading to stimulate 3'-5' exonuclease activity. Interacts (when ubiquitinated) with UBQLN4 (via its UBA domain). Interacts with CYREN (via XLF motif). Interacts with GFI1; promoting methylation by PRMT1. Interacts with DYNLL1; inhibiting the activity of MRE11. Interacts with C1QBP and RAD50; interaction takes place in absence of DNA damage to form the MRC (MRE11-RAD50-C1QBP) complex that inhibits the activity of MRE11. Interacts with AGER/RAGE. AGER is recruited to DNA double-strand break sites where it enhances MRE11 endonuclease activity to promote DNA repair. In terms of assembly, (Microbial infection) Interacts with herpes simplex virus 1 protein UL12. The cofactor is Mn(2+). In terms of processing, phosphorylated by ATM at Ser-676 and Ser-678 in response to DNA damage, promoting MRE11 activity: phosphorylation activates MRE11 by preventing the interaction between MRE11 and the C1QBP inhibitor. Phosphorylation at Ser-649 by PLK1 primes for phosphorylation at Ser-688 by CK2, inhibiting recruitment of the MRN complex to DNA damage sites. Asymmetric dimethylation by PRMT1 promotes MRE11 exonuclease activity. Post-translationally, lactylation at Lys-673 by CREBBP/CBP in response to DNA damage promotes DNA binding and MRE11 activity. In terms of processing, acetylated on lysine residues by KAT2A /GCN5. Ubiquitinated following DNA damage. Ubiquitination triggers interaction with UBQLN4, leading to MRE11 removal from chromatin and degradation by the proteasome. Ubiquitinated at Lys-339 and Lys-480 by RNF126 via 'Lys-27'- and 'Lys-29'-linked polyubiquitin chains, promoting the exonuclease activity of MRE11. Post-translationally, SUMOylated by PIAS1, stabilizing MRE11 on chromatin during end resection. DeSUMOylated by SENP3 following removal from DNA double-strand breaks (DSBs). In terms of processing, ufmylation at Lys-282 promotes MRE11 activity and is required for activation of the ATM and ATR kinases by the MRN complex. (Microbial infection) Following infection by adenovirus E4, ubiquitinated and degraded by a SCF-like E3 ubiquitin ligase complex containing viral proteins E1B-55K and E4-ORF6.

It is found in the nucleus. Its subcellular location is the chromosome. It localises to the telomere. Interaction with SAMHD1 stimulates the double-strand-specific 3'-5' exonuclease activity. RBBP8/CtIP specifically promotes the endonuclease activity to clear protein-DNA adducts and generate clean double-strand break ends. DYNLL1-binding inhibits the activity of MRE11. MRE11 activity is inhibited by C1QBP: in absence of DNA damage, C1QBP interacts with unphosphorylated MRE11, preventing formation and activity of the MRN complex. The mirin-derivative PFM39, specifically inhibits the 3'-5' exonuclease activity. The N-alkylated mirin-derivatives PFM03 and PFM01 specifically inhibit the endonuclease activity. Core component of the MRN complex, which plays a central role in double-strand break (DSB) repair, DNA recombination, maintenance of telomere integrity and meiosis. The MRN complex is involved in the repair of DNA double-strand breaks (DSBs) via homologous recombination (HR), an error-free mechanism which primarily occurs during S and G2 phases. The complex (1) mediates the end resection of damaged DNA, which generates proper single-stranded DNA, a key initial steps in HR, and is (2) required for the recruitment of other repair factors and efficient activation of ATM and ATR upon DNA damage. Within the MRN complex, MRE11 possesses both single-strand endonuclease activity and double-strand-specific 3'-5' exonuclease activity. After DSBs, MRE11 is loaded onto DSBs sites and cleaves DNA by cooperating with RBBP8/CtIP to initiate end resection. MRE11 first endonucleolytically cleaves the 5' strand at DNA DSB ends to prevent non-homologous end joining (NHEJ) and licence HR. It then generates a single-stranded DNA gap via 3' to 5' exonucleolytic degradation to create entry sites for EXO1- and DNA2-mediated 5' to 3' long-range resection, which is required for single-strand invasion and recombination. RBBP8/CtIP specifically promotes the endonuclease activity of MRE11 to clear protein-DNA adducts and generate clean double-strand break ends. MRE11 endonuclease activity is also enhanced by AGER/RAGE. The MRN complex is also required for DNA damage signaling via activation of the ATM and ATR kinases: the nuclease activity of MRE11 is not required to activate ATM and ATR. The MRN complex is also required for the processing of R-loops. The MRN complex is involved in the activation of the cGAS-STING pathway induced by DNA damage during tumorigenesis: the MRN complex acts by displacing CGAS from nucleosome sequestration, thereby activating it. In telomeres the MRN complex may modulate t-loop formation. Functionally, MRE11 contains two DNA-binding domains (DBDs), enabling it to bind both single-stranded DNA (ssDNA) and double-stranded DNA (dsDNA). The polypeptide is Double-strand break repair protein MRE11 (Homo sapiens (Human)).